The sequence spans 395 residues: S-adenosylmethionine synthase (395 aa).

Position 16 (His16) interacts with ATP. Asp18 is a binding site for Mg(2+). Glu44 contacts K(+). Glu57 and Gln100 together coordinate L-methionine. Positions 100 to 110 are flexible loop; it reads QSPDIAGGVNL. Residues 175 to 177, 242 to 243, Asp251, 257 to 258, Ala274, and Lys278 each bind ATP; these read DGK, RF, and RK. Residue Asp251 participates in L-methionine binding. Lys282 is a binding site for L-methionine.

Belongs to the AdoMet synthase family. In terms of assembly, homotetramer; dimer of dimers. The cofactor is Mg(2+). Requires K(+) as cofactor.

It localises to the cytoplasm. It carries out the reaction L-methionine + ATP + H2O = S-adenosyl-L-methionine + phosphate + diphosphate. It participates in amino-acid biosynthesis; S-adenosyl-L-methionine biosynthesis; S-adenosyl-L-methionine from L-methionine: step 1/1. Its function is as follows. Catalyzes the formation of S-adenosylmethionine (AdoMet) from methionine and ATP. The overall synthetic reaction is composed of two sequential steps, AdoMet formation and the subsequent tripolyphosphate hydrolysis which occurs prior to release of AdoMet from the enzyme. The polypeptide is S-adenosylmethionine synthase (Thermus thermophilus (strain ATCC BAA-163 / DSM 7039 / HB27)).